Here is a 364-residue protein sequence, read N- to C-terminus: Aminomethyltransferase (364 aa).

This sequence belongs to the GcvT family. The glycine cleavage system is composed of four proteins: P, T, L and H.

The catalysed reaction is N(6)-[(R)-S(8)-aminomethyldihydrolipoyl]-L-lysyl-[protein] + (6S)-5,6,7,8-tetrahydrofolate = N(6)-[(R)-dihydrolipoyl]-L-lysyl-[protein] + (6R)-5,10-methylene-5,6,7,8-tetrahydrofolate + NH4(+). In terms of biological role, the glycine cleavage system catalyzes the degradation of glycine. This is Aminomethyltransferase from Staphylococcus carnosus (strain TM300).